We begin with the raw amino-acid sequence, 231 residues long: 7-cyano-7-deazaguanine synthase (231 aa).

11 to 21 contributes to the ATP binding site; sequence LSGGLDSATTM. Cys195, Cys205, Cys208, and Cys211 together coordinate Zn(2+).

This sequence belongs to the QueC family. Zn(2+) serves as cofactor.

It catalyses the reaction 7-carboxy-7-deazaguanine + NH4(+) + ATP = 7-cyano-7-deazaguanine + ADP + phosphate + H2O + H(+). Its pathway is purine metabolism; 7-cyano-7-deazaguanine biosynthesis. Functionally, catalyzes the ATP-dependent conversion of 7-carboxy-7-deazaguanine (CDG) to 7-cyano-7-deazaguanine (preQ(0)). This chain is 7-cyano-7-deazaguanine synthase, found in Syntrophus aciditrophicus (strain SB).